Reading from the N-terminus, the 120-residue chain is MFLLHEYDIFWTFLIIASLIPILAFWISGILAPVSEGPEKLSSYESGIEPMGGAWLQFRIRYYMFALVFVVFDVETVFLYPWAMSFDVLGVSVFIEAFIFVLILVVGLVYAWRKGALEWS.

The next 3 helical transmembrane spans lie at 9–29 (IFWTFLIIASLIPILAFWISG), 64–84 (MFALVFVVFDVETVFLYPWAM), and 88–108 (VLGVSVFIEAFIFVLILVVGL).

The protein belongs to the complex I subunit 3 family. In terms of assembly, NDH is composed of at least 16 different subunits, 5 of which are encoded in the nucleus.

It is found in the plastid. Its subcellular location is the chloroplast thylakoid membrane. The enzyme catalyses a plastoquinone + NADH + (n+1) H(+)(in) = a plastoquinol + NAD(+) + n H(+)(out). It catalyses the reaction a plastoquinone + NADPH + (n+1) H(+)(in) = a plastoquinol + NADP(+) + n H(+)(out). NDH shuttles electrons from NAD(P)H:plastoquinone, via FMN and iron-sulfur (Fe-S) centers, to quinones in the photosynthetic chain and possibly in a chloroplast respiratory chain. The immediate electron acceptor for the enzyme in this species is believed to be plastoquinone. Couples the redox reaction to proton translocation, and thus conserves the redox energy in a proton gradient. The protein is NAD(P)H-quinone oxidoreductase subunit 3, chloroplastic of Agrostis stolonifera (Creeping bentgrass).